Consider the following 289-residue polypeptide: Ribosomal protein L11 methyltransferase (289 aa).

Positions 134, 155, 177, and 225 each coordinate S-adenosyl-L-methionine.

This sequence belongs to the methyltransferase superfamily. PrmA family.

The protein localises to the cytoplasm. It carries out the reaction L-lysyl-[protein] + 3 S-adenosyl-L-methionine = N(6),N(6),N(6)-trimethyl-L-lysyl-[protein] + 3 S-adenosyl-L-homocysteine + 3 H(+). Methylates ribosomal protein L11. This Parasynechococcus marenigrum (strain WH8102) protein is Ribosomal protein L11 methyltransferase.